We begin with the raw amino-acid sequence, 354 residues long: Probable L-ascorbate-6-phosphate lactonase UlaG (354 aa).

This sequence belongs to the UlaG family. The cofactor is a divalent metal cation.

Its subcellular location is the cytoplasm. It catalyses the reaction L-ascorbate 6-phosphate + H2O = 3-dehydro-L-gulonate 6-phosphate. It functions in the pathway cofactor degradation; L-ascorbate degradation; D-xylulose 5-phosphate from L-ascorbate: step 1/4. Its function is as follows. Probably catalyzes the hydrolysis of L-ascorbate-6-P into 3-keto-L-gulonate-6-P. Is essential for L-ascorbate utilization under anaerobic conditions. This chain is Probable L-ascorbate-6-phosphate lactonase UlaG, found in Salmonella heidelberg (strain SL476).